The primary structure comprises 353 residues: Holliday junction branch migration complex subunit RuvB (353 aa).

Residues 4–190 are large ATPase domain (RuvB-L); it reads HYIRFKIMTN…FGIPMRLNFY (187 aa). ATP contacts are provided by residues isoleucine 29, arginine 30, glycine 71, lysine 74, threonine 75, threonine 76, 137 to 139, arginine 180, tyrosine 190, and arginine 227; that span reads EDF. Position 75 (threonine 75) interacts with Mg(2+). The interval 191–261 is small ATPAse domain (RuvB-S); the sequence is NTEELKKVLN…ISDFGLNRLE (71 aa). The head domain (RuvB-H) stretch occupies residues 264–353; that stretch reads RIGLDSNDYR…HQFNIFNEHE (90 aa). DNA is bound by residues arginine 300, arginine 319, and arginine 324.

Belongs to the RuvB family. In terms of assembly, homohexamer. Forms an RuvA(8)-RuvB(12)-Holliday junction (HJ) complex. HJ DNA is sandwiched between 2 RuvA tetramers; dsDNA enters through RuvA and exits via RuvB. An RuvB hexamer assembles on each DNA strand where it exits the tetramer. Each RuvB hexamer is contacted by two RuvA subunits (via domain III) on 2 adjacent RuvB subunits; this complex drives branch migration. In the full resolvosome a probable DNA-RuvA(4)-RuvB(12)-RuvC(2) complex forms which resolves the HJ.

The protein resides in the cytoplasm. It carries out the reaction ATP + H2O = ADP + phosphate + H(+). Its function is as follows. The RuvA-RuvB-RuvC complex processes Holliday junction (HJ) DNA during genetic recombination and DNA repair, while the RuvA-RuvB complex plays an important role in the rescue of blocked DNA replication forks via replication fork reversal (RFR). RuvA specifically binds to HJ cruciform DNA, conferring on it an open structure. The RuvB hexamer acts as an ATP-dependent pump, pulling dsDNA into and through the RuvAB complex. RuvB forms 2 homohexamers on either side of HJ DNA bound by 1 or 2 RuvA tetramers; 4 subunits per hexamer contact DNA at a time. Coordinated motions by a converter formed by DNA-disengaged RuvB subunits stimulates ATP hydrolysis and nucleotide exchange. Immobilization of the converter enables RuvB to convert the ATP-contained energy into a lever motion, pulling 2 nucleotides of DNA out of the RuvA tetramer per ATP hydrolyzed, thus driving DNA branch migration. The RuvB motors rotate together with the DNA substrate, which together with the progressing nucleotide cycle form the mechanistic basis for DNA recombination by continuous HJ branch migration. Branch migration allows RuvC to scan DNA until it finds its consensus sequence, where it cleaves and resolves cruciform DNA. In Rickettsia massiliae (strain Mtu5), this protein is Holliday junction branch migration complex subunit RuvB.